Consider the following 326-residue polypeptide: MKQDATRNAAYTVDCEDYVHVVEFNPFESGDSGNLIAYGGSNYVVVGMCTFQEEETDIEGIQYKTLRTFHHGVRVDGIAWSPETKLDSLPPVIKFCTSAADLKIRLFTSDLQDKNEYKVLEGHSDFINDLVFHPKEGQELASVSDDHTCRIWNLEGKQTAHFLLHSPGMSVCWHPEETFKLMVAEKNGTIRFYDLMAQQAILSLQSEQTPLMSAHWCLKNTFKVGAVAGNDWIIWDITRSSYPQETRPVHMDRAHLFRWSAISENLFATTGYPGKMASQFQIHHLGHSQPVLIGSVAVGSGLSWHRTLPLCAVGGDHKLLFWVTEI.

WD repeat units follow at residues 70–117 (HHGV…KNEY), 122–162 (GHSD…TAHF), 164–203 (LHSP…AILS), and 294–325 (GSVA…WVTE).

Component of the Nup107-160 subcomplex of the nuclear pore complex (NPC). The Nup107-160 subcomplex includes NUP160, NUP133, NUP107, NUP98, NUP85, NUP43, NUP37, SEH1 and SEC13.

It is found in the chromosome. The protein resides in the centromere. It localises to the kinetochore. Its subcellular location is the nucleus. The protein localises to the nuclear pore complex. In terms of biological role, component of the Nup107-160 subcomplex of the nuclear pore complex (NPC). The Nup107-160 subcomplex is required for the assembly of a functional NPC. The Nup107-160 subcomplex is also required for normal kinetochore microtubule attachment, mitotic progression and chromosome segregation. The protein is Nucleoporin Nup37 (Nup37) of Mus musculus (Mouse).